A 509-amino-acid chain; its full sequence is Pancreatic secretory granule membrane major glycoprotein GP2 (509 aa).

The N-terminal stretch at 1-21 (MVGSYVLWLALASCILTLASP) is a signal peptide. The interval 36-56 (DPCQNYTLLDEPSRSTENTEG) is D10C. 10 disulfide bridges follow: Cys-38–Cys-132, Cys-60–Cys-147, Cys-82–Cys-120, Cys-88–Cys-152, Cys-113–Cys-121, Cys-162–Cys-172, Cys-166–Cys-181, Cys-183–Cys-213, Cys-201–Cys-292, and Cys-233–Cys-256. Asn-40, Asn-97, and Asn-109 each carry an N-linked (GlcNAc...) asparagine glycan. The region spanning 158-202 (ATDKCKNLCRPEEACSFLNGTWDCFCRSDLNSSDVHSLQPRLNCG) is the EGF-like domain. N-linked (GlcNAc...) asparagine glycans are attached at residues Asn-176, Asn-188, and Asn-232. The interval 200 to 293 (NCGAKEIQVS…TILNINFQCA (94 aa)) is ZP-N. Positions 200 to 456 (NCGAKEIQVS…PCCSRSQQRS (257 aa)) constitute a ZP domain. Asn-263 and Asn-314 each carry an N-linked (GlcNAc...) asparagine glycan. The flexible ZP-N/ZP-C linker stretch occupies residues 294-317 (YPLDMKVSLQTALHPIVSSLNISV). The interval 318 to 329 (DGEGEFTVRMAL) is internal hydrophobic patch (IHP). The tract at residues 318–456 (DGEGEFTVRM…PCCSRSQQRS (139 aa)) is ZP-C. Cystine bridges form between Cys-373–Cys-433, Cys-394–Cys-449, and Cys-438–Cys-445. The external hydrophobic patch (EHP) stretch occupies residues 463 to 471 (PARVLDLGP). Asp-484 carries GPI-anchor amidated aspartate lipidation. Positions 485–509 (GTPSTAGFLLAWPMLLLPILLAELF) are cleaved as a propeptide — removed in mature form.

Interacts with SYCN. Interacts with bacterial adhesin fimH. Post-translationally, N-glycosylated. Expressed in pancreas.

The protein localises to the zymogen granule membrane. The protein resides in the secreted. Its subcellular location is the cell membrane. It localises to the apical cell membrane. It is found in the membrane raft. The protein localises to the endosome. In terms of biological role, functions as an intestinal M-cell transcytotic receptor specific of type-I-piliated bacteria that participates in the mucosal immune response toward these bacteria. At the apical membrane of M-cells it binds fimH, a protein of the bacteria type I pilus tip. Internalizes bound bacteria, like E.coli and S.typhimurium, from the lumen of the intestine and delivers them, through M-cells, to the underlying organized lymphoid follicles where they are captured by antigen-presenting dendritic cells to elicit a mucosal immune response. This is Pancreatic secretory granule membrane major glycoprotein GP2 from Canis lupus familiaris (Dog).